The primary structure comprises 199 residues: MIAYIEGKLAHKDPTFVVVDVQGIGYHIRVSLHTFSQLKDLERVKIHTFLHIKEDAHTLFGFADLMEKEMFLHLTSISGIGPGTALVVLSSMNPIELKEAIAREDVKTIQSVKGIGLKTAQRVILELKDKMKKDALLAGSDSKQNFSVSHNSIRSEALTALITLGFTKTVAEKNLDLILKGNSNSFTLEDLIKQALKMS.

Residues 1 to 63 form a domain I region; sequence MIAYIEGKLA…EDAHTLFGFA (63 aa). The domain II stretch occupies residues 64–142; it reads DLMEKEMFLH…KDALLAGSDS (79 aa). A flexible linker region spans residues 143-151; it reads KQNFSVSHN. The domain III stretch occupies residues 151-199; that stretch reads NSIRSEALTALITLGFTKTVAEKNLDLILKGNSNSFTLEDLIKQALKMS.

The protein belongs to the RuvA family. Homotetramer. Forms an RuvA(8)-RuvB(12)-Holliday junction (HJ) complex. HJ DNA is sandwiched between 2 RuvA tetramers; dsDNA enters through RuvA and exits via RuvB. An RuvB hexamer assembles on each DNA strand where it exits the tetramer. Each RuvB hexamer is contacted by two RuvA subunits (via domain III) on 2 adjacent RuvB subunits; this complex drives branch migration. In the full resolvosome a probable DNA-RuvA(4)-RuvB(12)-RuvC(2) complex forms which resolves the HJ.

It is found in the cytoplasm. The RuvA-RuvB-RuvC complex processes Holliday junction (HJ) DNA during genetic recombination and DNA repair, while the RuvA-RuvB complex plays an important role in the rescue of blocked DNA replication forks via replication fork reversal (RFR). RuvA specifically binds to HJ cruciform DNA, conferring on it an open structure. The RuvB hexamer acts as an ATP-dependent pump, pulling dsDNA into and through the RuvAB complex. HJ branch migration allows RuvC to scan DNA until it finds its consensus sequence, where it cleaves and resolves the cruciform DNA. The polypeptide is Holliday junction branch migration complex subunit RuvA (Cytophaga hutchinsonii (strain ATCC 33406 / DSM 1761 / CIP 103989 / NBRC 15051 / NCIMB 9469 / D465)).